Consider the following 629-residue polypeptide: tRNA uridine 5-carboxymethylaminomethyl modification enzyme MnmG (629 aa).

13-18 (GGGHAG) is an FAD binding site. 273 to 287 (GPRYCPSIEDKVMRF) provides a ligand contact to NAD(+).

The protein belongs to the MnmG family. As to quaternary structure, homodimer. Heterotetramer of two MnmE and two MnmG subunits. It depends on FAD as a cofactor.

Its subcellular location is the cytoplasm. In terms of biological role, NAD-binding protein involved in the addition of a carboxymethylaminomethyl (cmnm) group at the wobble position (U34) of certain tRNAs, forming tRNA-cmnm(5)s(2)U34. This chain is tRNA uridine 5-carboxymethylaminomethyl modification enzyme MnmG, found in Photorhabdus laumondii subsp. laumondii (strain DSM 15139 / CIP 105565 / TT01) (Photorhabdus luminescens subsp. laumondii).